Consider the following 373-residue polypeptide: GTP cyclohydrolase 1 type 2 homolog (373 aa).

A divalent metal cation contacts are provided by His67, His68, Asp106, His333, and Glu336.

Belongs to the GTP cyclohydrolase I type 2/NIF3 family. Homohexamer.

The polypeptide is GTP cyclohydrolase 1 type 2 homolog (Listeria innocua serovar 6a (strain ATCC BAA-680 / CLIP 11262)).